We begin with the raw amino-acid sequence, 435 residues long: Elongation factor 1-alpha (435 aa).

A tr-type G domain is found at 5–226 (KTHINLVVIG…DTMEPPKRPT (222 aa)). A G1 region spans residues 14 to 21 (GHVDSGKS). 14–21 (GHVDSGKS) is a binding site for GTP. Residues 70 to 74 (GITID) form a G2 region. The interval 91–94 (DAPG) is G3. GTP-binding positions include 91–95 (DAPGH) and 151–154 (NKMD). The interval 151-154 (NKMD) is G4. A G5 region spans residues 190–192 (SGF).

The protein belongs to the TRAFAC class translation factor GTPase superfamily. Classic translation factor GTPase family. EF-Tu/EF-1A subfamily.

It is found in the cytoplasm. Its function is as follows. This protein promotes the GTP-dependent binding of aminoacyl-tRNA to the A-site of ribosomes during protein biosynthesis. This Cryptosporidium parvum protein is Elongation factor 1-alpha.